Here is a 1233-residue protein sequence, read N- to C-terminus: MSFFNFRKIFKLGSEKKKKQYEHVKRDLNPEEFWEIIGELGDGAFGKVYKAQNKETNVLAAAKVIDTKSEEELEDYMVEIDILASCDHPNIVKLLDAFYYENNLWILIEFCAGGAVDAVMLELERPLTESQIQVVCKQTLEALNYLHDNKIIHRDLKAGNILFTLDGDIKLADFGVSAKNTRTIQRRDSFIGTPYWMAPEVVMCETSKDRPYDYKADVWSLGITLIEMAEIEPPHHELNPMRVLLKIAKSEPPTLAQPSKWSSNFKDFLRKCLEKNVDARWTTSQLLQHPFVTVDSNKPVRELIAEAKAEVTEEVEDGKEEDEEEEAENALPIPANKRASSDLSIASSEEDKLSQNACILESVSERTEQSTSEDKFSNKILNEKPTTDGPEKAVDEHASDVNLETGAELNDQTVGIHENGREKKRPKLENLPDTQDQQTVDVNSVSEENENNRVTLETNTDCLKPEEDRNKENQETLESKLIQSEEINDTHIQTMDLVSQETGEKEADFQAVDNEVGLTKEETQEKLGKDGTAQKVITSDRSSEVGTDEALDDTQKAAELSKAAQSGEGDEALAPTQTLAEKPTEGPEAGGAEEEPPGGERVEDKQPEQQPAVCEAEGQLTSTSETTRATLEQPETDEVEQVSESNSIEELERLVVTGAEARALGSEGEAAATEVDLERKENAQKVPVKAESQAPAASQPSEPHPVLIPSININSETTENKEEMGALPKPETILPPEPEHEKGNDTDSGTGSTVENSSGDLNLSISSFLSKAKDSGSVSLQETRRQKKTLKKTRKFIVDGVEVSVTTSKIVTDSDSKTEELRFLRRQELRELRLLQKEEQRAQQQLNGKLQQQREQIFRRFEQEMLSKKRQYDQEIENLEKQQKQTIERLEQEHTNRLRDEAKRIKGEQEKELSKFQNVLKNRKKEVMNEVEKAPRELRRELTKRRKEELAQSQHAQEQEFVQKQQQELDGSLKKIIQQQKAELANIERECLNNKQQLMRAREAAIWELEERHLQEKHQLLKQQLKDQYFMQRHQLLKRHEKETEQMQRYNQRLIEELKNRQTQERARLPKIQRSEAKTRMAMFKKSLRINSTATPDQDREKIKQFAAQEEKRQKNERMAQHQKHESQMRDLQLQCEANVRELHQLQNEKCHLLVEHETQKLKELDEEHSQELKEWREKLRPRKKTLEEEFARKLQEQEVFFKMTGESECLNPSAQSRISKFYPIPTLHSTGS.

Ser-14 carries the phosphoserine modification. The region spanning Trp-34–Val-292 is the Protein kinase domain. ATP is bound by residues Leu-40–Val-48 and Lys-63. Asp-155 serves as the catalytic Proton acceptor. The residue at position 183 (Thr-183) is a Phosphothreonine. At Ser-189 the chain carries Phosphoserine. The disordered stretch occupies residues Ala-309–Asp-351. The span at Thr-312 to Glu-328 shows a compositional bias: acidic residues. Phosphoserine occurs at positions 340, 341, 344, 347, 348, 354, and 372. The span at Val-363 to Ser-399 shows a compositional bias: basic and acidic residues. Disordered stretches follow at residues Val-363 to Arg-453, Val-498 to Glu-650, Ala-663 to Leu-761, and Ala-772 to Lys-791. Positions Pro-432–Asp-441 are enriched in polar residues. Over residues Leu-518–Lys-529 the composition is skewed to basic and acidic residues. A phosphoserine mark is found at Ser-543, Ser-561, and Ser-566. Positions Gly-598–Pro-607 are enriched in basic and acidic residues. Positions Gln-619–Thr-630 are enriched in polar residues. Phosphoserine is present on residues Ser-643, Ser-647, and Ser-666. Low complexity predominate over residues Ala-690 to Ser-701. Residues Thr-746–Leu-761 are compositionally biased toward polar residues. Phosphoserine occurs at positions 775 and 777. Position 812 is a phosphothreonine (Thr-812). Residue Ser-816 is modified to Phosphoserine. The stretch at Leu-824 to Ala-1067 forms a coiled coil. The UVR domain occupies Asp-873 to Glu-908. The interval Lys-944–Gln-963 is disordered. Residues Gln-954–Gln-963 show a composition bias toward low complexity. Thr-1095 bears the Phosphothreonine mark. The stretch at Ala-1107–Arg-1181 forms a coiled coil. The disordered stretch occupies residues Gln-1109–Met-1129.

This sequence belongs to the protein kinase superfamily. STE Ser/Thr protein kinase family. STE20 subfamily. Proteolytically cleaved by caspase-3. Post-translationally, autophosphorylated. As to expression, ubiquitously expressed.

Its subcellular location is the cytoplasm. It carries out the reaction L-seryl-[protein] + ATP = O-phospho-L-seryl-[protein] + ADP + H(+). The catalysed reaction is L-threonyl-[protein] + ATP = O-phospho-L-threonyl-[protein] + ADP + H(+). Functionally, mediates apoptosis and actin stress fiber dissolution. This chain is STE20-like serine/threonine-protein kinase (Slk), found in Mus musculus (Mouse).